Consider the following 157-residue polypeptide: Probable succinate transporter subunit YjjB (157 aa).

4 consecutive transmembrane segments (helical) span residues 2 to 22 (GIISFIFALAEDMLLAAIPAV), 55 to 75 (AGFNIEWATFLAALLVGSIGI), 87 to 107 (IFTVAAVIPMFPGISAYTAMI), and 129 to 149 (FLKASSIVGALSIGLSIPGLW).

It belongs to the ThrE exporter (TC 2.A.79) family. In terms of assembly, the transporter is composed of YjjB and YjjP.

It localises to the cell inner membrane. Functionally, involved in succinate export with YjjP. Both proteins are required for export. The polypeptide is Probable succinate transporter subunit YjjB (Klebsiella pneumoniae (strain 342)).